A 200-amino-acid chain; its full sequence is Ras-related protein Rab-10 (200 aa).

Residues Ser-18, Gly-19, Val-20, Gly-21, Lys-22, Thr-23, Cys-24, Asn-35, Thr-36, Ser-40, and Thr-41 each contribute to the GTP site. Thr-23 is a Mg(2+) binding site. 2 consecutive short sequence motifs (switch) follow at residues 32 to 46 and 64 to 81; these read DAFN…EIDF and DTAG…YYRG. Mg(2+)-binding residues include Thr-41 and Asp-64. Gly-67 is a binding site for GTP. Residue Thr-73 is modified to Phosphothreonine. Residue Lys-102 is modified to N6-acetyllysine. A Glycyl lysine isopeptide (Lys-Gly) (interchain with G-Cter in ubiquitin) cross-link involves residue Lys-102. 4 residues coordinate GTP: Asn-122, Lys-123, Asp-125, and Met-126. Lys-136 is covalently cross-linked (Glycyl lysine isopeptide (Lys-Gly) (interchain with G-Cter in ubiquitin)). The GTP site is built by Ser-152, Ala-153, and Lys-154. Lys-154 is covalently cross-linked (Glycyl lysine isopeptide (Lys-Gly) (interchain with G-Cter in ubiquitin)). S-geranylgeranyl cysteine attachment occurs at residues Cys-199 and Cys-200.

The protein belongs to the small GTPase superfamily. Rab family. As to quaternary structure, interacts with MYO5A; mediates the transport to the plasma membrane of SLC2A4/GLUT4 storage vesicles. Interacts with GDI1 and with GDI2; negatively regulates RAB10 association with membranes and activation. Interacts (GDP-bound form) with LLGL1; the interaction is direct and promotes RAB10 association with membranes and activation through competition with the Rab inhibitor GDI1. Interacts with EXOC4; probably associates with the exocyst. Interacts (GTP-bound form) with MICALCL, MICAL1, MICAL3, EHBP1 and EHBP1L1; at least in case of MICAL1 two molecules of RAB10 can bind to one molecule of MICAL1. Interacts with TBC1D13. Interacts with SEC16A. Interacts with CHM. Interacts with LRRK2; interaction facilitates phosphorylation of Thr-73. Interacts with RILPL1 and RILPL2 when phosphorylated on Thr-73. Interacts with TBC1D21. Interacts with MARCKS. Requires Mg(2+) as cofactor. Post-translationally, phosphorylation of Thr-73 in the switch II region by LRRK2 prevents the association of RAB regulatory proteins, including CHM and RAB GDP dissociation inhibitors GDI1 and GDI2. Phosphorylation of Thr-73 by LRRK2 is stimulated by RAB29 and RAB32. Phosphorylation by LRRK2 is required for localization to stressed lysosomes. Highest levels in neural and muscle tissues.

The protein localises to the cytoplasmic vesicle membrane. The protein resides in the golgi apparatus. It is found in the trans-Golgi network membrane. It localises to the endosome membrane. Its subcellular location is the recycling endosome membrane. The protein localises to the cytoplasmic vesicle. The protein resides in the phagosome membrane. It is found in the cell projection. It localises to the cilium. Its subcellular location is the endoplasmic reticulum membrane. The protein localises to the cytoplasm. The protein resides in the perinuclear region. It is found in the lysosome. It catalyses the reaction GTP + H2O = GDP + phosphate + H(+). With respect to regulation, regulated by guanine nucleotide exchange factors (GEFs) DENND4C and RABIF which promote the exchange of bound GDP for free GTP. Regulated by GTPase activating proteins (GAPs) including TBC1D21 which increase the GTP hydrolysis activity. Inhibited by GDP dissociation inhibitors GDI1 and GDI2 which prevent Rab-GDP dissociation. Its function is as follows. The small GTPases Rab are key regulators of intracellular membrane trafficking, from the formation of transport vesicles to their fusion with membranes. Rabs cycle between an inactive GDP-bound form and an active GTP-bound form that is able to recruit to membranes different set of downstream effectors directly responsible for vesicle formation, movement, tethering and fusion. That Rab is mainly involved in the biosynthetic transport of proteins from the Golgi to the plasma membrane. Regulates, for instance, SLC2A4/GLUT4 glucose transporter-enriched vesicles delivery to the plasma membrane. In parallel, it regulates the transport of TLR4, a toll-like receptor to the plasma membrane and therefore may be important for innate immune response. Also plays a specific role in asymmetric protein transport to the plasma membrane. In neurons, it is involved in axonogenesis through regulation of vesicular membrane trafficking toward the axonal plasma membrane. In epithelial cells, it regulates transport from the Golgi to the basolateral membrane. May play a role in the basolateral recycling pathway and in phagosome maturation. May play a role in endoplasmic reticulum dynamics and morphology controlling tubulation along microtubules and tubules fusion. Together with LRRK2, RAB8A, and RILPL1, it regulates ciliogenesis. When phosphorylated by LRRK2 on Thr-73, it binds RILPL1 and inhibits ciliogenesis. Participates in the export of a subset of neosynthesized proteins through a Rab8-Rab10-Rab11-dependent endososomal export route. Targeted to and stabilized on stressed lysosomes through LRRK2 phosphorylation where it promotes the extracellular release of lysosomal content through EHBP1 and EHNP1L1 effector proteins. The chain is Ras-related protein Rab-10 from Rattus norvegicus (Rat).